The primary structure comprises 284 residues: Bifunctional protein FolD (284 aa).

Residues 165-167 (GRS) and S190 contribute to the NADP(+) site.

It belongs to the tetrahydrofolate dehydrogenase/cyclohydrolase family. In terms of assembly, homodimer.

It carries out the reaction (6R)-5,10-methylene-5,6,7,8-tetrahydrofolate + NADP(+) = (6R)-5,10-methenyltetrahydrofolate + NADPH. The enzyme catalyses (6R)-5,10-methenyltetrahydrofolate + H2O = (6R)-10-formyltetrahydrofolate + H(+). It functions in the pathway one-carbon metabolism; tetrahydrofolate interconversion. In terms of biological role, catalyzes the oxidation of 5,10-methylenetetrahydrofolate to 5,10-methenyltetrahydrofolate and then the hydrolysis of 5,10-methenyltetrahydrofolate to 10-formyltetrahydrofolate. The sequence is that of Bifunctional protein FolD from Streptococcus equi subsp. zooepidemicus (strain MGCS10565).